Reading from the N-terminus, the 183-residue chain is MILVDWQLRDRIARGHIRIDPFDPALVQPNSIDIRLGNHFVWYAPGKQVIDPYDKTTVTSGVEGKHADFFDLLPGQFVLAETLECISLPDNIVATIEGKSSIARLGVTLHQTGGWIDAGFRGSITLEMANVNARPVRVYAGMPIGQLVFYTTERAENPYDKKADAKYLDQRQATLSKYHENRK.

Residues 99 to 104, aspartate 117, 125 to 127, glutamine 146, tyrosine 159, lysine 166, and glutamine 170 contribute to the dCTP site; these read KSSIAR and TLE. The Proton donor/acceptor role is filled by glutamate 127.

Belongs to the dCTP deaminase family. Homotrimer.

It catalyses the reaction dCTP + 2 H2O = dUMP + NH4(+) + diphosphate. It functions in the pathway pyrimidine metabolism; dUMP biosynthesis; dUMP from dCTP: step 1/1. In terms of biological role, bifunctional enzyme that catalyzes both the deamination of dCTP to dUTP and the hydrolysis of dUTP to dUMP without releasing the toxic dUTP intermediate. The polypeptide is dCTP deaminase, dUMP-forming (Methanoregula boonei (strain DSM 21154 / JCM 14090 / 6A8)).